Reading from the N-terminus, the 256-residue chain is Ribosomal RNA large subunit methyltransferase E (256 aa).

S-adenosyl-L-methionine-binding residues include Gly-48, Trp-50, Asp-68, Asp-86, and Asp-111. Lys-151 serves as the catalytic Proton acceptor. A TRAM domain is found at 198 to 256 (PVSPGDELDATVVDIGSEGDGIIKIDGYTLFVPGVENGDSVRVRVTDLKSNVGFAEVIE).

It belongs to the class I-like SAM-binding methyltransferase superfamily. RNA methyltransferase RlmE family.

Its subcellular location is the cytoplasm. The catalysed reaction is uridine(2552) in 23S rRNA + S-adenosyl-L-methionine = 2'-O-methyluridine(2552) in 23S rRNA + S-adenosyl-L-homocysteine + H(+). Specifically methylates the uridine in position 2552 of 23S rRNA at the 2'-O position of the ribose in the fully assembled 50S ribosomal subunit. The protein is Ribosomal RNA large subunit methyltransferase E of Haloquadratum walsbyi (strain DSM 16790 / HBSQ001).